We begin with the raw amino-acid sequence, 505 residues long: RNA-splicing ligase RtcB homolog (505 aa).

Mn(2+) is bound by residues Asp119, Cys122, His227, His259, and His353. A GMP-binding site is contributed by 226–230 (NHYAE). GMP is bound by residues 353–354 (HN), 402–405 (GGSM), Ser409, 428–431 (HGAG), and Lys504. His428 (GMP-histidine intermediate) is an active-site residue.

This sequence belongs to the RtcB family. Catalytic component of the tRNA-splicing ligase complex. Requires Mn(2+) as cofactor.

It localises to the nucleus. The protein resides in the cytoplasm. The enzyme catalyses a 3'-end 3'-phospho-ribonucleotide-RNA + a 5'-end dephospho-ribonucleoside-RNA + GTP = a ribonucleotidyl-ribonucleotide-RNA + GMP + diphosphate. The catalysed reaction is a 3'-end 2',3'-cyclophospho-ribonucleotide-RNA + a 5'-end dephospho-ribonucleoside-RNA + GTP + H2O = a ribonucleotidyl-ribonucleotide-RNA + GMP + diphosphate + H(+). Functionally, catalytic subunit of the tRNA-splicing ligase complex that acts by directly joining spliced tRNA halves to mature-sized tRNAs. Required for the ligation of mRNAs and specifically, regulates xbp-1 mRNA splicing during the endoplasmic reticulum stress-induced unfolded protein response. Has a neuroprotective role in the age-dependent degeneration of dopamine neurons, which is mediated by xbp-1. This is RNA-splicing ligase RtcB homolog from Caenorhabditis elegans.